The following is a 294-amino-acid chain: MPEEKVWSVVELLKTTIAFFAEKKIDEPRLSAELLLGHVLGLQRLQLYLDHERPLTLKELEAFRAACRERLQGRPVQYIAGEAFFYGYQFFVDERVLIPRPETELVLEHAMERLAASGLDSADSPSILDVGTGSGCIAITLALRLPGARVTAADVSADALDVARRNADAHGVSERIRFVEADALSASFADAVGGPFDLLVSNPPYIPEAEWATLQEEVRRYEPRLALVAPTGFEYYQSIAVAAPSLLRKGGVLCFELHADGAAEVRNLLGSSFADVQVMQDYNKLDRGLSCMAQ.

S-adenosyl-L-methionine-binding positions include 131–135 (GTGSG), Asp154, and Asn202. 202-205 (NPPY) serves as a coordination point for substrate.

It belongs to the protein N5-glutamine methyltransferase family. PrmC subfamily.

The enzyme catalyses L-glutaminyl-[peptide chain release factor] + S-adenosyl-L-methionine = N(5)-methyl-L-glutaminyl-[peptide chain release factor] + S-adenosyl-L-homocysteine + H(+). Functionally, methylates the class 1 translation termination release factors RF1/PrfA and RF2/PrfB on the glutamine residue of the universally conserved GGQ motif. This Chlorobaculum tepidum (strain ATCC 49652 / DSM 12025 / NBRC 103806 / TLS) (Chlorobium tepidum) protein is Release factor glutamine methyltransferase.